We begin with the raw amino-acid sequence, 1302 residues long: DNA-directed RNA polymerase subunit beta (1302 aa).

Belongs to the RNA polymerase beta chain family. The RNAP catalytic core consists of 2 alpha, 1 beta, 1 beta' and 1 omega subunit. When a sigma factor is associated with the core the holoenzyme is formed, which can initiate transcription.

The catalysed reaction is RNA(n) + a ribonucleoside 5'-triphosphate = RNA(n+1) + diphosphate. Its function is as follows. DNA-dependent RNA polymerase catalyzes the transcription of DNA into RNA using the four ribonucleoside triphosphates as substrates. This chain is DNA-directed RNA polymerase subunit beta, found in Spiroplasma citri.